Here is a 247-residue protein sequence, read N- to C-terminus: Cobalt transport protein CbiM (247 aa).

The signal sequence occupies residues 1–21 (MVGWGVLILLMVLWLPRQAYA). 7 helical membrane passes run 27–47 (GYLP…ALIL), 64–84 (LVLA…LPSV), 96–116 (LGAV…ILLF), 119–139 (LLLA…MAVV), 159–179 (GVAV…TTSL), 181–201 (LALA…KFAS), and 202–222 (IFAV…VIMV).

The protein belongs to the CbiM family. As to quaternary structure, forms an energy-coupling factor (ECF) transporter complex composed of an ATP-binding protein (A component, CbiO), a transmembrane protein (T component, CbiQ) and 2 possible substrate-capture proteins (S components, CbiM and CbiN) of unknown stoichimetry.

It localises to the cell membrane. Its pathway is cofactor biosynthesis; adenosylcobalamin biosynthesis. In terms of biological role, part of the energy-coupling factor (ECF) transporter complex CbiMNOQ involved in cobalt import. The chain is Cobalt transport protein CbiM from Kyrpidia tusciae (strain DSM 2912 / NBRC 15312 / T2) (Bacillus tusciae).